The primary structure comprises 343 residues: Stimulator of interferon genes protein homolog (343 aa).

N84 is a glycosylation site (N-linked (GlcNAc...) asparagine). The next 2 helical transmembrane spans lie at 87–107 and 109–129; these read IYLI…TGNY and NVMP…WSFT. N157 contacts 3',2'-cGAMP. N187 carries an N-linked (GlcNAc...) asparagine glycan. A helical membrane pass occupies residues 195–215; sequence LVILIPDEMFVNGVLESHLLD. R232, K235, E255, T258, and S262 together coordinate 3',2'-cGAMP. 2 N-linked (GlcNAc...) asparagine glycosylation sites follow: N270 and N333.

It belongs to the STING family.

It localises to the endoplasmic reticulum membrane. Functionally, facilitator of innate immune signaling that binds cyclic dinucleotides produced in response to infection by bacteria and/or viruses, and promotes the activation of the NF-kappa-B transcription factor Rel (Relish). Recognizes and binds cyclic di-GMP (c-di-GMP), a cyclic dinucleotide messenger produced by bacteria such as L.monocytogenes, leading to activation of the peptidoglycan recognition protein (IMD) signaling pathway and activation of Rel (Relish). Innate immune response is triggered in response to double-stranded RNA from viruses delivered to the cytoplasm: Sting acts by specifically binding cyclic dinucleotides 3',2'-cGAMP and 2',3'-cGAMP produced by cGlr1 and cGlr2 in response to RNA virus in the cytosol. Has a strong preference for 3',2'-cGAMP compared to other cyclic dinucleotides such as 2',3'-cGAMP or 3'3'-c-di-GMP. Upon binding to 3',2'-cGAMP, activates an antiviral immune response, leading to the activation of Rel (Relish). Activated in brain in response to Zika virus infection, leading to autophagy. The polypeptide is Stimulator of interferon genes protein homolog (Drosophila melanogaster (Fruit fly)).